We begin with the raw amino-acid sequence, 448 residues long: Adenylosuccinate synthetase (448 aa).

Residues 22 to 28 (GDEGKGK) and 50 to 52 (GHT) each bind GTP. Catalysis depends on Asp23, which acts as the Proton acceptor. Mg(2+) contacts are provided by Asp23 and Gly50. IMP-binding positions include 23 to 26 (DEGK), 48 to 51 (NAGH), Thr139, Arg153, Gln234, Thr249, and Arg321. The active-site Proton donor is the His51. Residue 317–323 (SVTGRPR) participates in substrate binding. Residues Arg323, 349–351 (KLD), and 431–433 (STG) each bind GTP.

The protein belongs to the adenylosuccinate synthetase family. In terms of assembly, homodimer. Mg(2+) is required as a cofactor.

The protein resides in the cytoplasm. The catalysed reaction is IMP + L-aspartate + GTP = N(6)-(1,2-dicarboxyethyl)-AMP + GDP + phosphate + 2 H(+). It participates in purine metabolism; AMP biosynthesis via de novo pathway; AMP from IMP: step 1/2. Functionally, plays an important role in the de novo pathway of purine nucleotide biosynthesis. Catalyzes the first committed step in the biosynthesis of AMP from IMP. The protein is Adenylosuccinate synthetase of Paraburkholderia phytofirmans (strain DSM 17436 / LMG 22146 / PsJN) (Burkholderia phytofirmans).